A 377-amino-acid polypeptide reads, in one-letter code: Homoserine O-succinyltransferase (377 aa).

The 309-residue stretch at 50 to 358 folds into the AB hydrolase-1 domain; that stretch reads NAVLICHALS…PSSYGHDSFL (309 aa). The Nucleophile role is filled by Ser-156. Position 226 (Arg-226) interacts with substrate. Catalysis depends on residues Asp-321 and His-354. Residue Asp-355 participates in substrate binding.

This sequence belongs to the AB hydrolase superfamily. MetX family. In terms of assembly, homodimer.

The protein resides in the cytoplasm. It carries out the reaction L-homoserine + succinyl-CoA = O-succinyl-L-homoserine + CoA. Its pathway is amino-acid biosynthesis; L-methionine biosynthesis via de novo pathway; O-succinyl-L-homoserine from L-homoserine: step 1/1. Functionally, transfers a succinyl group from succinyl-CoA to L-homoserine, forming succinyl-L-homoserine. The sequence is that of Homoserine O-succinyltransferase from Nitrosomonas europaea (strain ATCC 19718 / CIP 103999 / KCTC 2705 / NBRC 14298).